A 404-amino-acid polypeptide reads, in one-letter code: Cysteine desulfurase IscS (404 aa).

Pyridoxal 5'-phosphate contacts are provided by residues 75-76, Asn155, Gln183, and 203-205; these read AT and SGH. Lys206 carries the post-translational modification N6-(pyridoxal phosphate)lysine. Thr243 is a pyridoxal 5'-phosphate binding site. The active-site Cysteine persulfide intermediate is Cys328. [2Fe-2S] cluster is bound at residue Cys328.

Belongs to the class-V pyridoxal-phosphate-dependent aminotransferase family. NifS/IscS subfamily. As to quaternary structure, homodimer. Forms a heterotetramer with IscU, interacts with other sulfur acceptors. It depends on pyridoxal 5'-phosphate as a cofactor.

It localises to the cytoplasm. It carries out the reaction (sulfur carrier)-H + L-cysteine = (sulfur carrier)-SH + L-alanine. Its pathway is cofactor biosynthesis; iron-sulfur cluster biosynthesis. Its function is as follows. Master enzyme that delivers sulfur to a number of partners involved in Fe-S cluster assembly, tRNA modification or cofactor biosynthesis. Catalyzes the removal of elemental sulfur atoms from cysteine to produce alanine. Functions as a sulfur delivery protein for Fe-S cluster synthesis onto IscU, an Fe-S scaffold assembly protein, as well as other S acceptor proteins. The protein is Cysteine desulfurase IscS of Shewanella oneidensis (strain ATCC 700550 / JCM 31522 / CIP 106686 / LMG 19005 / NCIMB 14063 / MR-1).